Consider the following 130-residue polypeptide: Small ribosomal subunit protein uS9 (130 aa).

This sequence belongs to the universal ribosomal protein uS9 family.

The polypeptide is Small ribosomal subunit protein uS9 (Streptococcus suis (strain 98HAH33)).